The following is a 412-amino-acid chain: Histidine--tRNA ligase (412 aa).

It belongs to the class-II aminoacyl-tRNA synthetase family. In terms of assembly, homodimer.

Its subcellular location is the cytoplasm. It catalyses the reaction tRNA(His) + L-histidine + ATP = L-histidyl-tRNA(His) + AMP + diphosphate + H(+). This is Histidine--tRNA ligase from Rickettsia typhi (strain ATCC VR-144 / Wilmington).